We begin with the raw amino-acid sequence, 367 residues long: 2-aminoethylphosphonate--pyruvate transaminase (367 aa).

Pyridoxal 5'-phosphate contacts are provided by residues 65-67 (SGS), Tyr92, Thr143, and Asp168. At Lys194 the chain carries N6-(pyridoxal phosphate)lysine. Thr243 contacts pyridoxal 5'-phosphate.

This sequence belongs to the class-V pyridoxal-phosphate-dependent aminotransferase family. PhnW subfamily. In terms of assembly, homodimer. The cofactor is pyridoxal 5'-phosphate.

It carries out the reaction (2-aminoethyl)phosphonate + pyruvate = phosphonoacetaldehyde + L-alanine. Functionally, involved in phosphonate degradation. This is 2-aminoethylphosphonate--pyruvate transaminase (phnW) from Salmonella typhimurium (strain LT2 / SGSC1412 / ATCC 700720).